A 211-amino-acid chain; its full sequence is Thiamine-phosphate synthase (211 aa).

4-amino-2-methyl-5-(diphosphooxymethyl)pyrimidine-binding positions include 36–40 (QLRDK) and asparagine 68. Mg(2+)-binding residues include aspartate 69 and aspartate 88. A 4-amino-2-methyl-5-(diphosphooxymethyl)pyrimidine-binding site is contributed by serine 107. 133-135 (TKS) lines the 2-[(2R,5Z)-2-carboxy-4-methylthiazol-5(2H)-ylidene]ethyl phosphate pocket. Lysine 136 serves as a coordination point for 4-amino-2-methyl-5-(diphosphooxymethyl)pyrimidine. 2-[(2R,5Z)-2-carboxy-4-methylthiazol-5(2H)-ylidene]ethyl phosphate contacts are provided by residues glycine 164 and 184–185 (IS).

It belongs to the thiamine-phosphate synthase family. The cofactor is Mg(2+).

The enzyme catalyses 2-[(2R,5Z)-2-carboxy-4-methylthiazol-5(2H)-ylidene]ethyl phosphate + 4-amino-2-methyl-5-(diphosphooxymethyl)pyrimidine + 2 H(+) = thiamine phosphate + CO2 + diphosphate. The catalysed reaction is 2-(2-carboxy-4-methylthiazol-5-yl)ethyl phosphate + 4-amino-2-methyl-5-(diphosphooxymethyl)pyrimidine + 2 H(+) = thiamine phosphate + CO2 + diphosphate. It catalyses the reaction 4-methyl-5-(2-phosphooxyethyl)-thiazole + 4-amino-2-methyl-5-(diphosphooxymethyl)pyrimidine + H(+) = thiamine phosphate + diphosphate. It participates in cofactor biosynthesis; thiamine diphosphate biosynthesis; thiamine phosphate from 4-amino-2-methyl-5-diphosphomethylpyrimidine and 4-methyl-5-(2-phosphoethyl)-thiazole: step 1/1. In terms of biological role, condenses 4-methyl-5-(beta-hydroxyethyl)thiazole monophosphate (THZ-P) and 2-methyl-4-amino-5-hydroxymethyl pyrimidine pyrophosphate (HMP-PP) to form thiamine monophosphate (TMP). The protein is Thiamine-phosphate synthase of Halalkalibacterium halodurans (strain ATCC BAA-125 / DSM 18197 / FERM 7344 / JCM 9153 / C-125) (Bacillus halodurans).